A 208-amino-acid polypeptide reads, in one-letter code: Proheparin-binding EGF-like growth factor (208 aa).

A signal peptide spans 1–23; the sequence is MKLLPSVVLKLFLAAVLSALVTG. Residues 24–62 constitute a propeptide that is removed on maturation; sequence ESLERLRRGLAAATSNPDPPTGTTNQLLPTGADRAQEVQ. Over 24 to 160 the chain is Extracellular; that stretch reads ESLERLRRGL…ENPLYTYDHT (137 aa). Residues 82–103 form a disordered region; the sequence is ALATPGKEKNGKKKRKGKGLGK. Thr-85 is a glycosylation site (O-linked (GalNAc...) threonine). The span at 91-102 shows a compositional bias: basic residues; it reads NGKKKRKGKGLG. One can recognise an EGF-like domain in the interval 104–144; it reads KRDPCLKKYKDYCIHGECRYLKELRIPSCHCLPGYHGQRCH. Intrachain disulfides connect Cys-108–Cys-121, Cys-116–Cys-132, and Cys-134–Cys-143. The propeptide at 149–208 is C-terminal; it reads PVENPLYTYDHTTVLAVVAVVLSSVCLLVIVGLLMFRYHRRGGYDLESEEKVKLGMASSH. Residues 161–184 traverse the membrane as a helical segment; it reads TVLAVVAVVLSSVCLLVIVGLLMF. Topologically, residues 185–208 are cytoplasmic; sequence RYHRRGGYDLESEEKVKLGMASSH.

In terms of assembly, interacts with FBLN1. Interacts with EGFR and ERBB4. In terms of processing, O-glycosylated. As to expression, most abundant in skeletal muscle, lung, spleen brain and heart.

It localises to the secreted. The protein resides in the extracellular space. Its subcellular location is the cell membrane. Its function is as follows. Growth factor that mediates its effects via EGFR, ERBB2 and ERBB4. Required for normal cardiac valve formation and normal heart function. Promotes smooth muscle cell proliferation. May be involved in macrophage-mediated cellular proliferation. It is mitogenic for fibroblasts, but not endothelial cells. It is able to bind EGF receptor/EGFR with higher affinity than EGF itself and is a far more potent mitogen for smooth muscle cells than EGF. Also acts as a diphtheria toxin receptor. The protein is Proheparin-binding EGF-like growth factor (Hbegf) of Rattus norvegicus (Rat).